We begin with the raw amino-acid sequence, 117 residues long: Phosphoribosyl-ATP pyrophosphatase (117 aa).

This sequence belongs to the PRA-PH family.

Its subcellular location is the cytoplasm. It catalyses the reaction 1-(5-phospho-beta-D-ribosyl)-ATP + H2O = 1-(5-phospho-beta-D-ribosyl)-5'-AMP + diphosphate + H(+). Its pathway is amino-acid biosynthesis; L-histidine biosynthesis; L-histidine from 5-phospho-alpha-D-ribose 1-diphosphate: step 2/9. The polypeptide is Phosphoribosyl-ATP pyrophosphatase (Rhodospirillum rubrum (strain ATCC 11170 / ATH 1.1.1 / DSM 467 / LMG 4362 / NCIMB 8255 / S1)).